We begin with the raw amino-acid sequence, 131 residues long: ATP synthase epsilon chain (131 aa).

This sequence belongs to the ATPase epsilon chain family. F-type ATPases have 2 components, CF(1) - the catalytic core - and CF(0) - the membrane proton channel. CF(1) has five subunits: alpha(3), beta(3), gamma(1), delta(1), epsilon(1). CF(0) has three main subunits: a, b and c.

It is found in the cell membrane. In terms of biological role, produces ATP from ADP in the presence of a proton gradient across the membrane. The polypeptide is ATP synthase epsilon chain (Clostridium novyi (strain NT)).